The primary structure comprises 77 residues: Small ribosomal subunit protein bS18 (77 aa).

It belongs to the bacterial ribosomal protein bS18 family. Part of the 30S ribosomal subunit. Forms a tight heterodimer with protein bS6.

Its function is as follows. Binds as a heterodimer with protein bS6 to the central domain of the 16S rRNA, where it helps stabilize the platform of the 30S subunit. The chain is Small ribosomal subunit protein bS18 from Bacillus cytotoxicus (strain DSM 22905 / CIP 110041 / 391-98 / NVH 391-98).